The sequence spans 183 residues: Regulatory protein RecX (183 aa).

The segment covering 1-12 (MTSFPHPSTSES) has biased composition (polar residues). A disordered region spans residues 1–26 (MTSFPHPSTSESGPDPDSEPNREEQA).

It belongs to the RecX family.

Its subcellular location is the cytoplasm. Functionally, modulates RecA activity. This chain is Regulatory protein RecX, found in Mycobacterium sp. (strain KMS).